The chain runs to 37 residues: Large ribosomal subunit protein bL36 (37 aa).

Belongs to the bacterial ribosomal protein bL36 family.

This Vibrio atlanticus (strain LGP32) (Vibrio splendidus (strain Mel32)) protein is Large ribosomal subunit protein bL36.